Consider the following 480-residue polypeptide: Uridine/deoxyuridine transporter (480 aa).

14 helical membrane passes run 14-34, 55-75, 93-113, 115-135, 147-167, 174-194, 207-227, 239-259, 280-300, 320-340, 358-378, 382-402, 417-437, and 449-469; these read VGSI…FQLN, SIAL…LFLP, LTMI…LMIG, ILQG…HVKV, ILTS…GWLV, SVFF…SFGT, WTGV…VNAL, WLLA…FWQV, GLLI…NGII, LVTL…SGFL, IIGI…LLLL, FIGI…GIVL, GMFN…PTVL, and ISGI…SFLI.

The protein belongs to the major facilitator superfamily. EmrB family.

Its subcellular location is the cell membrane. Responsible for the uptake of uridine and deoxyuridine. Not involved in purine nucleoside uptake. The polypeptide is Uridine/deoxyuridine transporter (Lactococcus lactis subsp. cremoris (strain MG1363)).